A 162-amino-acid polypeptide reads, in one-letter code: Ecotin (162 aa).

A signal peptide spans 1–18; that stretch reads MFVPAVVFAALASTSAWA. A disulfide bond links Cys70 and Cys107.

This sequence belongs to the protease inhibitor I11 (ecotin) family. In terms of assembly, homodimer.

The protein resides in the periplasm. Its function is as follows. General inhibitor of pancreatic serine proteases: inhibits chymotrypsin, trypsin, elastases, factor X, kallikrein as well as a variety of other proteases. The chain is Ecotin from Salmonella choleraesuis (strain SC-B67).